The primary structure comprises 720 residues: Asp/Glu-specific dipeptidyl-peptidase (720 aa).

Residues 1–21 form the signal peptide; sequence MKKRLLLPLFAALCLSQIAHA. The cysteines at positions 69 and 86 are disulfide-linked. Active-site charge relay system residues include His85, Asp227, and Ser655.

The protein belongs to the peptidase S46 family. Homodimer.

It is found in the cell surface. With respect to regulation, enzyme activity is completely blocked by diisopropyl-fluorophosphates, moderately by phenylmethylsulfonyl fluoride (PMSF) and 4-(2-methyl)benzenesulfonyl fluoride, and slightly by pepstatin in vitro. Functionally, catalyzes the removal of dipeptides from the N-terminus of oligopeptides. Shows a strict specificity for acidic residues (Asp or Glu) in the P1 position, and has a hydrophobic residue preference at the P2 position. Preferentially cleaves the synthetic substrate Leu-Asp-methylcoumaryl-7-amide (Leu-Asp-MCA) as compared to Leu-Glu-MCA. Is involved in amino acid metabolism and bacterial growth of asaccharolytic P.gingivalis, that utilizes amino acids from extracellular proteinaceous nutrients as energy and carbon sources. The polypeptide is Asp/Glu-specific dipeptidyl-peptidase (Porphyromonas gingivalis (strain ATCC 33277 / DSM 20709 / CIP 103683 / JCM 12257 / NCTC 11834 / 2561)).